Reading from the N-terminus, the 434-residue chain is ATP-dependent RNA helicase uap56 (434 aa).

Positions 1 to 43 (MASAQEDLIDYEEEEELVQDQPAQEITPAADTAENGEKSDKKG) are disordered. Residues 7-18 (DLIDYEEEEELV) show a composition bias toward acidic residues. The Q motif signature appears at 51–79 (TGFRDFLLKPELLRAITDSGFEHPSEVQQ). Positions 82–257 (IPQSILGTDV…KKFMQNPLEI (176 aa)) constitute a Helicase ATP-binding domain. 95-102 (AKSGMGKT) is an ATP binding site. The DECD box motif lies at 204 to 207 (DECD). In terms of domain architecture, Helicase C-terminal spans 269–430 (GLQQHYVKLE…ELPDEIDVGS (162 aa)).

This sequence belongs to the DEAD box helicase family. DECD subfamily. As to quaternary structure, interacts with mlo3 and rae1.

It is found in the nucleus. It catalyses the reaction ATP + H2O = ADP + phosphate + H(+). Its function is as follows. ATP-binding RNA helicase involved in transcription elongation and required for the export of mRNA out of the nucleus. SUB2 also plays a role in pre-mRNA splicing and spliceosome assembly. May be involved in rDNA and telomeric silencing, and maintenance of genome integrity. Links the mRNA adapter mlo3 to rae1 for targeting mRNA-protein complex to the proteins of the nucleoporin complex (NPC). This chain is ATP-dependent RNA helicase uap56 (uap56), found in Schizosaccharomyces pombe (strain 972 / ATCC 24843) (Fission yeast).